Reading from the N-terminus, the 292-residue chain is 4-hydroxy-tetrahydrodipicolinate synthase (292 aa).

T45 serves as a coordination point for pyruvate. The active-site Proton donor/acceptor is Y133. Residue K161 is the Schiff-base intermediate with substrate of the active site. I203 lines the pyruvate pocket.

The protein belongs to the DapA family. Homotetramer; dimer of dimers.

It is found in the cytoplasm. It carries out the reaction L-aspartate 4-semialdehyde + pyruvate = (2S,4S)-4-hydroxy-2,3,4,5-tetrahydrodipicolinate + H2O + H(+). It participates in amino-acid biosynthesis; L-lysine biosynthesis via DAP pathway; (S)-tetrahydrodipicolinate from L-aspartate: step 3/4. In terms of biological role, catalyzes the condensation of (S)-aspartate-beta-semialdehyde [(S)-ASA] and pyruvate to 4-hydroxy-tetrahydrodipicolinate (HTPA). The sequence is that of 4-hydroxy-tetrahydrodipicolinate synthase from Vibrio cholerae serotype O1 (strain ATCC 39541 / Classical Ogawa 395 / O395).